Reading from the N-terminus, the 356-residue chain is sn-glycerol-3-phosphate import ATP-binding protein UgpC (356 aa).

Residues leucine 4 to isoleucine 235 form the ABC transporter domain. ATP is bound at residue glycine 37–serine 44.

The protein belongs to the ABC transporter superfamily. sn-glycerol-3-phosphate importer (TC 3.A.1.1.3) family. The complex is composed of two ATP-binding proteins (UgpC), two transmembrane proteins (UgpA and UgpE) and a solute-binding protein (UgpB).

It localises to the cell inner membrane. The catalysed reaction is sn-glycerol 3-phosphate(out) + ATP + H2O = sn-glycerol 3-phosphate(in) + ADP + phosphate + H(+). Part of the ABC transporter complex UgpBAEC involved in sn-glycerol-3-phosphate (G3P) import. Responsible for energy coupling to the transport system. The protein is sn-glycerol-3-phosphate import ATP-binding protein UgpC of Escherichia coli O6:H1 (strain CFT073 / ATCC 700928 / UPEC).